The sequence spans 367 residues: Protein NDRG4-B (367 aa).

Over residues methionine 1 to leucine 12 the composition is skewed to basic and acidic residues. 2 disordered regions span residues methionine 1–glutamate 21 and leucine 333–cysteine 367. Positions cysteine 347–cysteine 367 are enriched in polar residues.

This sequence belongs to the NDRG family.

The protein localises to the cytoplasm. The protein resides in the cytosol. Functionally, contributes to the maintenance of intracerebral BDNF levels within the normal range. May enhance growth factor-induced ERK1 and ERK2 phosphorylation. May attenuate growth factor-promoted ELK1 phosphorylation in a microtubule-dependent manner. The chain is Protein NDRG4-B (ndrg4-b) from Xenopus laevis (African clawed frog).